We begin with the raw amino-acid sequence, 395 residues long: Synaptotagmin-8 (395 aa).

Residues 1-44 are Extracellular-facing; it reads MQADRSMKMGHVSNPLSTSAPVDATAGPNLIPDLITKIPWPRWI. A helical; Signal-anchor for type III membrane protein membrane pass occupies residues 45–65; that stretch reads LFIAILAAGVLLVSCLLCVIC. Topologically, residues 66–395 are cytoplasmic; it reads YCCHRQRHRK…PRLPLLRPRS (330 aa). 2 C2 domains span residues 113–229 and 241–370; these read PWGQ…ESWY and QMGE…AQWH.

It belongs to the synaptotagmin family. Homodimer or homooligomer. Homodimerization and homooligomerization do not depend on Ca(2+). Interacts with SYNCRIP isoform 2 C-terminus. Binds inositol 1,3,4,5-tetrakisphosphate (IP4). Binds to AP2 in a Ca(2+)-independent manner. Interacts with STX1A, STX1B and STX2; the interaction is Ca(2+)-dependent. As to expression, ubiquitous. Strongly expressed in heart, kidney, cerebral cortex, pancreas, and many insulin-secreting cells; lower expression in spleen. Broadly distributed in kidney.

It is found in the cell membrane. The protein resides in the cytoplasmic vesicle. It localises to the secretory vesicle. Its subcellular location is the acrosome. In terms of biological role, involved in the trafficking and exocytosis of secretory vesicles in non-neuronal tissues. Mediates Ca(2+)-regulation of exocytosis acrosomal reaction in sperm. May mediate Ca(2+)-regulation of exocytosis in insulin secreted cells. This is Synaptotagmin-8 (Syt8) from Rattus norvegicus (Rat).